A 301-amino-acid polypeptide reads, in one-letter code: UDP-N-acetylenolpyruvoylglucosamine reductase (301 aa).

Residues 24 to 190 (RVGGLAQFYD…VSAQLQLQPG (167 aa)) form the FAD-binding PCMH-type domain. R169 is a catalytic residue. S220 acts as the Proton donor in catalysis. E290 is a catalytic residue.

This sequence belongs to the MurB family. FAD serves as cofactor.

It localises to the cytoplasm. It catalyses the reaction UDP-N-acetyl-alpha-D-muramate + NADP(+) = UDP-N-acetyl-3-O-(1-carboxyvinyl)-alpha-D-glucosamine + NADPH + H(+). It functions in the pathway cell wall biogenesis; peptidoglycan biosynthesis. Functionally, cell wall formation. The chain is UDP-N-acetylenolpyruvoylglucosamine reductase from Synechococcus sp. (strain ATCC 27144 / PCC 6301 / SAUG 1402/1) (Anacystis nidulans).